The chain runs to 673 residues: ATP-dependent zinc metalloprotease FtsH (673 aa).

The Cytoplasmic segment spans residues 1 to 7; it reads MNGFFKN. Residues 8-28 traverse the membrane as a helical segment; sequence LSLWLVIGLLMVMLFNLFNSP. Residues 29 to 100 lie on the Periplasmic side of the membrane; sequence QGPGQSITFS…DVREPEGTPM (72 aa). A helical transmembrane segment spans residues 101-121; that stretch reads LMQILISWFPMLLLIAVWIYF. The Cytoplasmic portion of the chain corresponds to 122 to 673; it reads MRQMQSGGGR…DTPEGDDKDR (552 aa). 194–201 serves as a coordination point for ATP; the sequence is GPPGTGKT. His416 provides a ligand contact to Zn(2+). Glu417 is an active-site residue. Zn(2+) is bound by residues His420 and Asp492. Residues 601–673 form a disordered region; sequence ALKPLKKKDE…DTPEGDDKDR (73 aa). The span at 648–660 shows a compositional bias: polar residues; sequence STRTATEASTQEV. A compositionally biased stretch (basic and acidic residues) spans 661-673; the sequence is VSKDTPEGDDKDR.

It in the central section; belongs to the AAA ATPase family. This sequence in the C-terminal section; belongs to the peptidase M41 family. As to quaternary structure, homohexamer. Zn(2+) serves as cofactor.

It is found in the cell inner membrane. Acts as a processive, ATP-dependent zinc metallopeptidase for both cytoplasmic and membrane proteins. Plays a role in the quality control of integral membrane proteins. The chain is ATP-dependent zinc metalloprotease FtsH from Magnetococcus marinus (strain ATCC BAA-1437 / JCM 17883 / MC-1).